Here is a 306-residue protein sequence, read N- to C-terminus: Ribosomal RNA small subunit methyltransferase H (306 aa).

S-adenosyl-L-methionine is bound by residues 33 to 35, Asp-51, Phe-78, Asp-96, and Gln-103; that span reads GGY.

Belongs to the methyltransferase superfamily. RsmH family.

It is found in the cytoplasm. The enzyme catalyses cytidine(1402) in 16S rRNA + S-adenosyl-L-methionine = N(4)-methylcytidine(1402) in 16S rRNA + S-adenosyl-L-homocysteine + H(+). In terms of biological role, specifically methylates the N4 position of cytidine in position 1402 (C1402) of 16S rRNA. In Rickettsia typhi (strain ATCC VR-144 / Wilmington), this protein is Ribosomal RNA small subunit methyltransferase H.